The sequence spans 313 residues: MRFSTTLATAATALFFTASQVSAIGELAFNLGVKNNDGTCKSTSDYETELQALKSYTSTVKVYAASDCNTLQNLGPAAEAEGFTIFVGVWPTDDSHYAAEKAALQTYLPKIKESTVAGFLVGSEALYRNDLTASQLSDKINDVRSVVADISDSDGKSYSGKQVGTVDSWNVLVAGYNSAVIEASDFVMANAFSYWQGQTMQNASYSFFDDIMQALQVIQSTKGSTDITFWVGETGWPTDGTNFESSYPSVDNAKQFWKEGICSMRAWGVNVIVFEAFDEDWKPNTSGTSDVEKHWGVFTSSDNLKYSLDCDFS.

Residues 1 to 23 form the signal peptide; the sequence is MRFSTTLATAATALFFTASQVSA. The active-site Proton donor is Glu124. An N-linked (GlcNAc...) asparagine glycan is attached at Asn202. Catalysis depends on Glu233, which acts as the Nucleophile. Asn284 carries N-linked (GlcNAc...) asparagine glycosylation.

It belongs to the glycosyl hydrolase 17 family.

It is found in the secreted. The protein resides in the cell wall. It carries out the reaction Successive hydrolysis of beta-D-glucose units from the non-reducing ends of (1-&gt;3)-beta-D-glucans, releasing alpha-glucose.. Its function is as follows. Glucanases possibly play a role in cell expansion during growth, in cell-cell fusion during mating, and in spore release during sporulation. This enzyme may be involved in beta-glucan degradation and also function biosynthetically as a transglycosylase. The chain is Glucan 1,3-beta-glucosidase (BGL2) from Saccharomyces cerevisiae (strain ATCC 204508 / S288c) (Baker's yeast).